The primary structure comprises 395 residues: Transcriptional coactivator yorkie (395 aa).

The tract at residues 73–100 is disordered; that stretch reads NSFFTPPAPSHSRANSADSTYDAGSQSS. A phosphoserine mark is found at Ser82, Ser88, Ser100, Ser117, and Ser145. The span at 84 to 100 shows a compositional bias: polar residues; that stretch reads SRANSADSTYDAGSQSS. Disordered stretches follow at residues 129-150 and 162-199; these read PSPQ…PASL and AAAA…PASS. Position 146 is a phosphoserine; by CDK7 (Ser146). A Phosphoserine modification is found at Ser149. The segment covering 162–179 has biased composition (low complexity); sequence AAAANNPNANPSSQQQPA. Residue Ser227 is modified to Phosphoserine. A Phosphotyrosine modification is found at Tyr228. At Ser232 the chain carries Phosphoserine. 2 consecutive WW domains span residues 241-274 and 310-343; these read GALP…DPRI and GPLP…DPRM.

The protein belongs to the YAP1 family. Interacts (via WW domains) with wts. Interacts (via N-terminus) with sd (via C-terminus) and this interaction enhances the transcriptional activity of sd. The phosphorylated form interacts with 14-3-3epsilon and 14-3-3zeta. Interacts with Ack and ex. Its activity is regulated by multiple phosphorylation events. Phosphorylation at Ser-88, Ser-145 and Ser-227 negatively regulate its activity and restrict its nuclear localization. Wts-mediated phosphorylation at Ser-145 promotes interaction with 14-3-3epsilon and 14-3-3zeta. Phosphorylation at Ser-88 and Ser-227 regulate nuclear localization and activity independent of 14-3-3 association. Phosphorylation at Ser-146 by Cdk7 promotes its stability by preventing ubiquitination by the DCX(DCAF12) complex. Post-translationally, ubiquitinated by the DCX(DCAF12) complex, leading to its degradation. Phosphorylation at Ser-146 by Cdk7 prevents ubiquitination by the DCX(DCAF12) complex.

It localises to the cytoplasm. The protein resides in the nucleus. Transcriptional coactivator which is the critical downstream regulatory target in the Hippo/SWH (Sav/Wts/Hpo) signaling pathway that plays a pivotal role in organ size control and tumor suppression by restricting proliferation and promoting apoptosis. The core of this pathway is composed of a kinase cascade wherein Hippo (Hpo), in complex with its regulatory protein Salvador (Sav), phosphorylates and activates Warts (Wts) in complex with its regulatory protein Mats, which in turn phosphorylates and inactivates the Yorkie (Yki) oncoprotein. The Hippo/SWH signaling pathway inhibits the activity of the transcriptional complex formed by Scalloped (sd) and Yki and the target genes of this pathway include cyclin-E (cycE), diap1 and bantam. Regulates the expression of G1/S-specific CycE and diap1, thereby promoting cell proliferation and inhibiting apoptosis. Required for transcriptional activity of sd in wing imaginal disks. Induces expression of expression of vestigial (vg) in wing and haltere disks and the expression of transcription factor E2f (E2f). This chain is Transcriptional coactivator yorkie (yki), found in Drosophila melanogaster (Fruit fly).